We begin with the raw amino-acid sequence, 193 residues long: Adenine phosphoribosyltransferase (193 aa).

It belongs to the purine/pyrimidine phosphoribosyltransferase family. In terms of assembly, homodimer.

It localises to the cytoplasm. The enzyme catalyses AMP + diphosphate = 5-phospho-alpha-D-ribose 1-diphosphate + adenine. The protein operates within purine metabolism; AMP biosynthesis via salvage pathway; AMP from adenine: step 1/1. Catalyzes a salvage reaction resulting in the formation of AMP, that is energically less costly than de novo synthesis. This is Adenine phosphoribosyltransferase from Bifidobacterium longum (strain DJO10A).